The chain runs to 957 residues: Glycine dehydrogenase (decarboxylating) (957 aa).

Lysine 708 is subject to N6-(pyridoxal phosphate)lysine.

This sequence belongs to the GcvP family. The glycine cleavage system is composed of four proteins: P, T, L and H. Requires pyridoxal 5'-phosphate as cofactor.

The catalysed reaction is N(6)-[(R)-lipoyl]-L-lysyl-[glycine-cleavage complex H protein] + glycine + H(+) = N(6)-[(R)-S(8)-aminomethyldihydrolipoyl]-L-lysyl-[glycine-cleavage complex H protein] + CO2. The glycine cleavage system catalyzes the degradation of glycine. The P protein binds the alpha-amino group of glycine through its pyridoxal phosphate cofactor; CO(2) is released and the remaining methylamine moiety is then transferred to the lipoamide cofactor of the H protein. In Salmonella paratyphi B (strain ATCC BAA-1250 / SPB7), this protein is Glycine dehydrogenase (decarboxylating).